Here is a 309-residue protein sequence, read N- to C-terminus: Protein lifeguard 3 (309 aa).

Disordered stretches follow at residues 1–31 (MSNPSAPPPYEDHNPLYPGSPPPGGYGQPSV) and 64–84 (PMNYGHDYNEEERAGSDSFRP). The span at 70-84 (DYNEEERAGSDSFRP) shows a compositional bias: basic and acidic residues. Phosphoserine is present on residues Ser-79 and Ser-81. 7 helical membrane-spanning segments follow: residues 101–121 (YCIISVQLLITVAIIAIFTFV), 132–152 (VAVYYVSYAVFLVTYLTLACC), 163–183 (IILLTIFTLALGFVTGTISSM), 188–208 (AVIIAMIITAVVSISVTIFCF), 221–241 (FCVLGIVLMVTGIVTSIVLIF), 244–264 (IYWLHMVYAALGAICFTLFLA), and 286–306 (GALQIYTDIVYIFTFVLQLVG).

Belongs to the BI1 family. LFG subfamily. In terms of tissue distribution, expressed in most tissues except spleen, thymus and testis.

It is found in the membrane. The protein localises to the lysosome membrane. It localises to the endosome membrane. In terms of biological role, negatively regulates aortic matrix metalloproteinase-9 (MMP9) production and may play a protective role in vascular remodeling. In Mus musculus (Mouse), this protein is Protein lifeguard 3 (Tmbim1).